Here is a 63-residue protein sequence, read N- to C-terminus: Large ribosomal subunit protein uL29 (63 aa).

The protein belongs to the universal ribosomal protein uL29 family.

The protein is Large ribosomal subunit protein uL29 of Shewanella frigidimarina (strain NCIMB 400).